A 245-amino-acid chain; its full sequence is DNA repair protein RecO (245 aa).

The protein belongs to the RecO family.

In terms of biological role, involved in DNA repair and RecF pathway recombination. This Erwinia tasmaniensis (strain DSM 17950 / CFBP 7177 / CIP 109463 / NCPPB 4357 / Et1/99) protein is DNA repair protein RecO.